Consider the following 224-residue polypeptide: Ribonuclease HII (224 aa).

Residues 1-210 (MKLGGIDEAG…LKKIEEKLQK (210 aa)) form the RNase H type-2 domain. Positions 7, 8, and 105 each coordinate a divalent metal cation.

This sequence belongs to the RNase HII family. Requires Mn(2+) as cofactor. Mg(2+) serves as cofactor.

It localises to the cytoplasm. The enzyme catalyses Endonucleolytic cleavage to 5'-phosphomonoester.. In terms of biological role, endonuclease that specifically degrades the RNA of RNA-DNA hybrids. This Thermococcus sibiricus (strain DSM 12597 / MM 739) protein is Ribonuclease HII.